Consider the following 261-residue polypeptide: 4-hydroxy-tetrahydrodipicolinate reductase (261 aa).

Residues 13–18 (GMAGRM), 91–93 (GTS), and 115–118 (APNF) contribute to the NAD(+) site. The active-site Proton donor/acceptor is the His-149. Residue His-150 coordinates (S)-2,3,4,5-tetrahydrodipicolinate. The active-site Proton donor is Lys-153. 159–160 (GT) serves as a coordination point for (S)-2,3,4,5-tetrahydrodipicolinate.

The protein belongs to the DapB family.

It is found in the cytoplasm. The enzyme catalyses (S)-2,3,4,5-tetrahydrodipicolinate + NAD(+) + H2O = (2S,4S)-4-hydroxy-2,3,4,5-tetrahydrodipicolinate + NADH + H(+). It catalyses the reaction (S)-2,3,4,5-tetrahydrodipicolinate + NADP(+) + H2O = (2S,4S)-4-hydroxy-2,3,4,5-tetrahydrodipicolinate + NADPH + H(+). It functions in the pathway amino-acid biosynthesis; L-lysine biosynthesis via DAP pathway; (S)-tetrahydrodipicolinate from L-aspartate: step 4/4. In terms of biological role, catalyzes the conversion of 4-hydroxy-tetrahydrodipicolinate (HTPA) to tetrahydrodipicolinate. This is 4-hydroxy-tetrahydrodipicolinate reductase from Granulibacter bethesdensis (strain ATCC BAA-1260 / CGDNIH1).